The following is a 1295-amino-acid chain: Phosphoribosylformylglycinamidine synthase (1295 aa).

The interval 305-327 (WPGAATGSGGEIRDEGATGRGAK) is disordered. Residues 307–318 (GAATGSGGEIRD) and A678 contribute to the ATP site. Residues E718, N722, and D884 each contribute to the Mg(2+) site. An ATP-binding site is contributed by S886. The Glutamine amidotransferase type-1 domain maps to 1042–1295 (VAVLREQGVN…IFRNARKQLG (254 aa)). The active-site Nucleophile is the C1135. Active-site residues include H1260 and E1262.

It in the N-terminal section; belongs to the FGAMS family. In terms of assembly, monomer.

The protein resides in the cytoplasm. The enzyme catalyses N(2)-formyl-N(1)-(5-phospho-beta-D-ribosyl)glycinamide + L-glutamine + ATP + H2O = 2-formamido-N(1)-(5-O-phospho-beta-D-ribosyl)acetamidine + L-glutamate + ADP + phosphate + H(+). The protein operates within purine metabolism; IMP biosynthesis via de novo pathway; 5-amino-1-(5-phospho-D-ribosyl)imidazole from N(2)-formyl-N(1)-(5-phospho-D-ribosyl)glycinamide: step 1/2. Functionally, phosphoribosylformylglycinamidine synthase involved in the purines biosynthetic pathway. Catalyzes the ATP-dependent conversion of formylglycinamide ribonucleotide (FGAR) and glutamine to yield formylglycinamidine ribonucleotide (FGAM) and glutamate. This is Phosphoribosylformylglycinamidine synthase from Escherichia coli O6:K15:H31 (strain 536 / UPEC).